A 369-amino-acid chain; its full sequence is Guanine nucleotide-binding protein subunit beta-2 (369 aa).

Residues 1–24 (MSTIAGESSSSSKMPENSQPTTTE) show a composition bias toward polar residues. Residues 1 to 28 (MSTIAGESSSSSKMPENSQPTTTEKGSE) form a disordered region. WD repeat units follow at residues 79–109 (GHVGKVLCMDWSLDKRHIVSSSQDGKVIVWD), 121–151 (MPTTWVMACAFSPSSQMIACGGLDNKCSVVP), 167–197 (THTSYMSCCTFLRSDNLILTGSGDSTCAIWD), 209–241 (GHTGDVFAIDVPKCDTGNTFISAGADKHSLVWD), 253–283 (GHEADINTVRFHPNGDAFATGSDDATCRLFD), 297–327 (SILFPVNGVDFSLSGRILFAGYGDYRVGVWD), and 339–369 (GHENRISCLRTSPDGTAVCSASWDCTIRIWA).

This sequence belongs to the WD repeat G protein beta family. In terms of assembly, g proteins are composed of 3 units, alpha, beta and gamma. Interacts with G protein gamma subunits gpc-1 and gpc-2 and with egl-10 and eat-16.

Guanine nucleotide-binding proteins (G proteins) are involved as a modulator or transducer in various transmembrane signaling systems. The beta and gamma chains are required for the GTPase activity, for replacement of GDP by GTP, and for G protein-effector interaction. Plays a role in regulating dopamine-mediated locomotion behavior. This chain is Guanine nucleotide-binding protein subunit beta-2, found in Caenorhabditis elegans.